A 398-amino-acid polypeptide reads, in one-letter code: Phosphoglycerate kinase (398 aa).

Substrate is bound by residues 23–25 (DLN), arginine 38, 61–64 (HFGR), arginine 119, and arginine 152. ATP contacts are provided by residues lysine 202, glutamate 324, and 354–357 (GGDT).

The protein belongs to the phosphoglycerate kinase family. As to quaternary structure, monomer.

It is found in the cytoplasm. It carries out the reaction (2R)-3-phosphoglycerate + ATP = (2R)-3-phospho-glyceroyl phosphate + ADP. The protein operates within carbohydrate degradation; glycolysis; pyruvate from D-glyceraldehyde 3-phosphate: step 2/5. This chain is Phosphoglycerate kinase, found in Bradyrhizobium diazoefficiens (strain JCM 10833 / BCRC 13528 / IAM 13628 / NBRC 14792 / USDA 110).